The sequence spans 390 residues: 23S rRNA (uracil(747)-C(5))-methyltransferase RlmC (390 aa).

Residues C12, C20, C23, and C100 each contribute to the [4Fe-4S] cluster site. Residues Q225, F254, E275, and N322 each contribute to the S-adenosyl-L-methionine site. Catalysis depends on C349, which acts as the Nucleophile.

This sequence belongs to the class I-like SAM-binding methyltransferase superfamily. RNA M5U methyltransferase family. RlmC subfamily.

The enzyme catalyses uridine(747) in 23S rRNA + S-adenosyl-L-methionine = 5-methyluridine(747) in 23S rRNA + S-adenosyl-L-homocysteine + H(+). Catalyzes the formation of 5-methyl-uridine at position 747 (m5U747) in 23S rRNA. The chain is 23S rRNA (uracil(747)-C(5))-methyltransferase RlmC from Shewanella baltica (strain OS223).